An 899-amino-acid chain; its full sequence is Translation initiation factor IF-2 (899 aa).

Disordered stretches follow at residues Thr-94–Lys-167 and Phe-259–Glu-309. Basic and acidic residues predominate over residues Ala-107–Glu-121. Over residues Arg-147–Val-164 the composition is skewed to low complexity. One can recognise a tr-type G domain in the interval Thr-399–Lys-568. Residues Gly-408 to Thr-415 form a G1 region. Gly-408–Thr-415 is a GTP binding site. The G2 stretch occupies residues Gly-433–His-437. A G3 region spans residues Asp-454 to Gly-457. Residues Asp-454–His-458 and Asn-508–Asp-511 contribute to the GTP site. The segment at Asn-508–Asp-511 is G4. Positions Ser-544–His-546 are G5.

This sequence belongs to the TRAFAC class translation factor GTPase superfamily. Classic translation factor GTPase family. IF-2 subfamily.

The protein resides in the cytoplasm. Its function is as follows. One of the essential components for the initiation of protein synthesis. Protects formylmethionyl-tRNA from spontaneous hydrolysis and promotes its binding to the 30S ribosomal subunits. Also involved in the hydrolysis of GTP during the formation of the 70S ribosomal complex. The sequence is that of Translation initiation factor IF-2 from Acinetobacter baylyi (strain ATCC 33305 / BD413 / ADP1).